Consider the following 89-residue polypeptide: Small ribosomal subunit protein uS14A (89 aa).

It belongs to the universal ribosomal protein uS14 family. As to quaternary structure, part of the 30S ribosomal subunit. Contacts proteins S3 and S10.

Its function is as follows. Binds 16S rRNA, required for the assembly of 30S particles and may also be responsible for determining the conformation of the 16S rRNA at the A site. This is Small ribosomal subunit protein uS14A from Bacillus pumilus (strain SAFR-032).